We begin with the raw amino-acid sequence, 251 residues long: Hydroxyacylglutathione hydrolase (251 aa).

The Zn(2+) site is built by histidine 53, histidine 55, aspartate 57, histidine 58, histidine 110, aspartate 127, and histidine 165.

The protein belongs to the metallo-beta-lactamase superfamily. Glyoxalase II family. Monomer. Zn(2+) is required as a cofactor.

It catalyses the reaction an S-(2-hydroxyacyl)glutathione + H2O = a 2-hydroxy carboxylate + glutathione + H(+). Its pathway is secondary metabolite metabolism; methylglyoxal degradation; (R)-lactate from methylglyoxal: step 2/2. Its function is as follows. Thiolesterase that catalyzes the hydrolysis of S-D-lactoyl-glutathione to form glutathione and D-lactic acid. In Escherichia coli O17:K52:H18 (strain UMN026 / ExPEC), this protein is Hydroxyacylglutathione hydrolase.